Reading from the N-terminus, the 236-residue chain is Small ribosomal subunit protein uS2 (236 aa).

This sequence belongs to the universal ribosomal protein uS2 family.

This chain is Small ribosomal subunit protein uS2, found in Brevibacillus brevis (strain 47 / JCM 6285 / NBRC 100599).